Reading from the N-terminus, the 139-residue chain is Gene 22 protein (139 aa).

This chain is Gene 22 protein (22), found in Mycobacterium phage D29 (Mycobacteriophage D29).